A 59-amino-acid polypeptide reads, in one-letter code: uncharacterized protein (59 aa).

This is an uncharacterized protein from Acheta domesticus (House cricket).